Consider the following 287-residue polypeptide: Probable phosphite transport system-binding protein PtxB (287 aa).

The first 23 residues, methionine 1 to alanine 23, serve as a signal peptide directing secretion.

This sequence belongs to the phosphate/phosphite/phosphonate binding protein family.

Probably forms part of a binding-protein-dependent phosphite transporter. Required for oxidation of phosphite to phosphate. The protein is Probable phosphite transport system-binding protein PtxB (ptxB) of Stutzerimonas stutzeri (Pseudomonas stutzeri).